The following is a 31-amino-acid chain: Potassium channel toxin alpha-KTx 19.2 (31 aa).

Disulfide bonds link cysteine 3/cysteine 22, cysteine 8/cysteine 27, and cysteine 12/cysteine 29.

It belongs to the short scorpion toxin superfamily. Potassium channel inhibitor family. Alpha-KTx 19 subfamily. As to quaternary structure, monomer. As to expression, expressed by the venom gland.

Its subcellular location is the secreted. Its function is as follows. Blocks voltage-gated potassium channels rKv1.1/KCNA1, rKv1.2/KCNA2, hKv1.3/KCNA3, rKv1.6/KCNA6 (IC(50)=75.9 nM) and, to a lesser extent, Shaker IR (with the inactivation domain removed). The chain is Potassium channel toxin alpha-KTx 19.2 from Buthus occitanus tunetanus (Common European scorpion).